We begin with the raw amino-acid sequence, 351 residues long: Photosystem II D2 protein (351 aa).

The chain crosses the membrane as a helical span at residues 39–59 (TAYLAIGGWLTGTTFVTSWYT). Histidine 116 contributes to the chlorophyll a binding site. Residues 123–139 (GFMLRQFEISRLVGIRP) traverse the membrane as a helical segment. Positions 128 and 141 each coordinate pheophytin a. A helical transmembrane segment spans residues 151–164 (VFVSVFLIYPLGQS). Position 196 (histidine 196) interacts with chlorophyll a. Residues 206 to 226 (GALLSAIHGVTVENTLYEDGE) traverse the membrane as a helical segment. A plastoquinone is bound by residues histidine 213 and phenylalanine 260. Histidine 213 is a Fe cation binding site. Fe cation is bound at residue histidine 267. The helical transmembrane segment at 277 to 293 (GLWTSSIGIIGLALNLR) threads the bilayer.

It belongs to the reaction center PufL/M/PsbA/D family. PSII is composed of 1 copy each of membrane proteins PsbA, PsbB, PsbC, PsbD, PsbE, PsbF, PsbH, PsbI, PsbJ, PsbK, PsbL, PsbM, PsbT, PsbX, PsbY, PsbZ, Psb30/Ycf12, peripheral proteins PsbO, CyanoQ (PsbQ), PsbU, PsbV and a large number of cofactors. It forms dimeric complexes. The D1/D2 heterodimer binds P680, chlorophylls that are the primary electron donor of PSII, and subsequent electron acceptors. It shares a non-heme iron and each subunit binds pheophytin, quinone, additional chlorophylls, carotenoids and lipids. There is also a Cl(-1) ion associated with D1 and D2, which is required for oxygen evolution. The PSII complex binds additional chlorophylls, carotenoids and specific lipids. is required as a cofactor.

Its subcellular location is the host cellular thylakoid membrane. It carries out the reaction 2 a plastoquinone + 4 hnu + 2 H2O = 2 a plastoquinol + O2. Photosystem II (PSII) is a light-driven water:plastoquinone oxidoreductase that uses light energy to abstract electrons from H(2)O, generating O(2) and a proton gradient subsequently used for ATP formation. It consists of a core antenna complex that captures photons, and an electron transfer chain that converts photonic excitation into a charge separation. The D1/D2 (PsbA/PsbD) reaction center heterodimer binds P680, the primary electron donor of PSII as well as several subsequent electron acceptors. D2 is needed for assembly of a stable PSII complex. This chain is Photosystem II D2 protein (psbD), found in Synechococcus.